Here is a 518-residue protein sequence, read N- to C-terminus: Motile sperm domain-containing protein 2 (518 aa).

Over 1 to 496 the chain is Cytoplasmic; that stretch reads MAENNAQNKA…QLQRSIWFQQ (496 aa). Positions 85–239 constitute a CRAL-TRIO domain; it reads IPRWLLELGG…HMGGTDPFKY (155 aa). The interval 252–312 is disordered; sequence PLCENGPIAS…KDENEKVDSK (61 aa). 2 stretches are compositionally biased toward basic and acidic residues: residues 265–279 and 300–312; these read TSSK…KETL and VSKK…VDSK. One can recognise an MSP domain in the interval 327 to 445; that stretch reads LLHISPAEEL…MEHRLRCHTV (119 aa). The interval 365–366 is required for FFAT motif binding and phosphorylated FFAT motif binding; that stretch reads RT. The chain crosses the membrane as a helical; Anchor for type IV membrane protein span at residues 497–518; the sequence is LLLALTMVLLDFVVSFFYSLYN.

In terms of assembly, homooligomer. Interacts (via MSP domain) with STARD3NL (via FFAT motif), RMDN3 (via FFAT motif), OSBPL1A (via FFAT motif) and CERT1 (via FFAT motif). Interacts (via MSP domain) with STARD3 (via phosphorylated FFAT motif); this interaction depends on the critical phosphorylation of STARD3 on 'Ser-209'. Interacts with RB1CC1 (via phosphorylated FFAT motif), MIGA2 (via phosphorylated FFAT motif) and OSBPL1A (via FFAT motif).

The protein resides in the endoplasmic reticulum membrane. In terms of biological role, endoplasmic reticulum-anchored protein that mediates the formation of contact sites between the endoplasmic (ER) and endosomes, mitochondria or Golgi through interaction with conventional- and phosphorylated-FFAT-containing organelle-bound proteins. In addition, forms endoplasmic reticulum (ER)-lipid droplets (LDs) contacts through a direct protein-membrane interaction and participates in LDs homeostasis. The attachment mechanism involves an amphipathic helix that has an affinity for lipid packing defects present at the surface of LDs. Promotes migration of primary monocytes and neutrophils, in response to various chemokines. This is Motile sperm domain-containing protein 2 from Mus musculus (Mouse).